The chain runs to 84 residues: Small ribosomal subunit protein bS20 (84 aa).

It belongs to the bacterial ribosomal protein bS20 family.

Binds directly to 16S ribosomal RNA. The chain is Small ribosomal subunit protein bS20 from Bacteroides fragilis (strain ATCC 25285 / DSM 2151 / CCUG 4856 / JCM 11019 / LMG 10263 / NCTC 9343 / Onslow / VPI 2553 / EN-2).